The following is a 217-amino-acid chain: Ubiquitin-conjugating enzyme E2 1 (217 aa).

A UBC core domain is found at 4–151; sequence NRSRRIAKEL…AREWTSSYAA (148 aa). Cysteine 89 acts as the Glycyl thioester intermediate in catalysis.

Belongs to the ubiquitin-conjugating enzyme family.

It localises to the cytoplasm. Its subcellular location is the nucleus. It catalyses the reaction S-ubiquitinyl-[E1 ubiquitin-activating enzyme]-L-cysteine + [E2 ubiquitin-conjugating enzyme]-L-cysteine = [E1 ubiquitin-activating enzyme]-L-cysteine + S-ubiquitinyl-[E2 ubiquitin-conjugating enzyme]-L-cysteine.. Its pathway is protein modification; protein ubiquitination. In terms of biological role, catalyzes the covalent attachment of ubiquitin to other proteins. Functions in degradation of misfolded or regulated proteins localized in the endoplasmic reticulum (ER) lumen or membrane via the ubiquitin-proteasome system. Cognate E2 conjugating enzyme for the HRD1 ubiquitin ligase complex, which is part of the ERAD-L and ERAD-M pathways responsible for the rapid degradation of soluble lumenal and membrane proteins with misfolded lumenal domains (ERAD-L), or ER-membrane proteins with misfolded transmembrane domains (ERAD-M). The polypeptide is Ubiquitin-conjugating enzyme E2 1 (ubc1) (Schizosaccharomyces pombe (strain 972 / ATCC 24843) (Fission yeast)).